The sequence spans 371 residues: MYEVDMTIVGGGLVGASIAWGLARSGINPLVLDGDDLDLRASRANFGLVWVQGKGLHAPHYALWSDASAKVWPTMTKALSDDSGIDVGLRQAGAYTFALSEEELEAVREDMESIALETNGRAPHFDVLNRQQTLERVPGLGPDVVGSIYCSADGHANALALFHALHTAMQKKGAAYRSNHRVQTIEPTTEGFILKGHGFSVISRRVVLAAGLENERLAPMVGLSCPLKCSKGQILVTEKSQTALPCLSAGMRQADEGGIMIGDSEETDSAKISSSSGISAVLASRALKIFPALSDLNVLRSWTGFRVKTADGIPIYDQSERYPGAFLFACHSGVTLAANHALIVAPQIASGKLEDDLSVFSARRFDAQQAE.

As to quaternary structure, heterodimer of a subunit A and a subunit B.

Its pathway is opine metabolism; octopine degradation. Functionally, oxidative cleavage of octopine into L-arginine and pyruvate. The sequence is that of Opine oxidase subunit B (ooxB) from Rhizobium meliloti (Ensifer meliloti).